The sequence spans 167 residues: Ribosome maturation factor RimM (167 aa).

Positions 94–165 (ENEYYYSDII…TIRITPMEGL (72 aa)) constitute a PRC barrel domain.

This sequence belongs to the RimM family. As to quaternary structure, binds ribosomal protein uS19.

It localises to the cytoplasm. Functionally, an accessory protein needed during the final step in the assembly of 30S ribosomal subunit, possibly for assembly of the head region. Essential for efficient processing of 16S rRNA. May be needed both before and after RbfA during the maturation of 16S rRNA. It has affinity for free ribosomal 30S subunits but not for 70S ribosomes. The protein is Ribosome maturation factor RimM of Staphylococcus haemolyticus (strain JCSC1435).